A 145-amino-acid polypeptide reads, in one-letter code: Methyl-coenzyme M reductase I operon protein D (145 aa).

MCR is composed of three subunits: alpha, beta, and gamma. The function of proteins C and D is not known.

This is Methyl-coenzyme M reductase I operon protein D (mcrD) from Methanothermobacter marburgensis (strain ATCC BAA-927 / DSM 2133 / JCM 14651 / NBRC 100331 / OCM 82 / Marburg) (Methanobacterium thermoautotrophicum).